Reading from the N-terminus, the 387-residue chain is 3-dehydroquinate synthase (387 aa).

It belongs to the archaeal-type DHQ synthase family.

The catalysed reaction is 2-amino-2,3,7-trideoxy-D-lyxo-hept-6-ulosonate + NAD(+) + H2O = 3-dehydroquinate + NH4(+) + NADH + H(+). Catalyzes the oxidative deamination and cyclization of 2-amino-3,7-dideoxy-D-threo-hept-6-ulosonic acid (ADH) to yield 3-dehydroquinate (DHQ), which is fed into the canonical shikimic pathway of aromatic amino acid biosynthesis. The polypeptide is 3-dehydroquinate synthase (Halobacterium salinarum (strain ATCC 29341 / DSM 671 / R1)).